Here is a 346-residue protein sequence, read N- to C-terminus: Ornithine carbamoyltransferase, catabolic (346 aa).

Residues Ser58–Thr61, Asn85, Arg109, and His136–Gln139 each bind carbamoyl phosphate. Residues Asn168, Asp239, and Ser243–Leu244 each bind L-ornithine. Residues Cys280–Leu281 and Arg332 each bind carbamoyl phosphate.

The protein belongs to the aspartate/ornithine carbamoyltransferase superfamily. OTCase family.

The protein resides in the cytoplasm. It catalyses the reaction carbamoyl phosphate + L-ornithine = L-citrulline + phosphate + H(+). The protein operates within amino-acid degradation; L-arginine degradation via ADI pathway; carbamoyl phosphate from L-arginine: step 2/2. In terms of biological role, reversibly catalyzes the transfer of the carbamoyl group from carbamoyl phosphate (CP) to the N(epsilon) atom of ornithine (ORN) to produce L-citrulline. This chain is Ornithine carbamoyltransferase, catabolic, found in Mycoplasma pneumoniae (strain ATCC 29342 / M129 / Subtype 1) (Mycoplasmoides pneumoniae).